The chain runs to 442 residues: Mannosylglycerate hydrolase (442 aa).

Substrate-binding positions include tyrosine 38, tryptophan 42–aspartate 45, tyrosine 90, glutamine 116, and glycine 176. Aspartate 178 acts as the Proton donor in catalysis. Residues arginine 213 and tyrosine 369–tryptophan 370 contribute to the substrate site. Glutamate 413 serves as the catalytic Proton acceptor.

The protein belongs to the glycosyl hydrolase 63 family. In terms of assembly, homodimer in solution.

The catalysed reaction is (2R)-2-O-(alpha-D-mannosyl)-glycerate + H2O = D-mannose + (R)-glycerate. The enzyme catalyses (2R)-2-O-(alpha-D-glucopyranosyl)-glycerate + H2O = (R)-glycerate + D-glucose. Activity is not stimulated by divalent cations and not affected in the presence of EDTA. Functionally, hydrolase that catalyzes the hydrolysis of mannosylglycerate (MG), a solute produced in response to osmotic stress in thermophiles, into mannose and glycerate. Can also hydrolyze glucosylglycerate (GG) to glucose and glycerate, with similar catalytic efficiency. Is highly specific for MG and GG, and cannot use mannosylglyceramide (MGA), glucosylglycerol, mannosylglucosylglycerate (MGG), glucosylglucosylglycerate (GGG) or trehalose as substrates. In Rubrobacter radiotolerans (Arthrobacter radiotolerans), this protein is Mannosylglycerate hydrolase.